A 636-amino-acid chain; its full sequence is Golgin subfamily A member 8F (636 aa).

Disordered stretches follow at residues 1 to 72 and 107 to 127; these read MAEE…SATL and NKQV…KQKA. A compositionally biased stretch (polar residues) spans 38 to 50; it reads TNGSIHETATSGG. 3 coiled-coil regions span residues 93–148, 211–263, and 306–412; these read VSQL…LNTD, LEQS…MSQE, and EVEL…QQKQ. Residues 109 to 127 are compositionally biased toward basic and acidic residues; it reads QVEHQLEEEKKANNEKQKA. Disordered stretches follow at residues 344–364, 422–449, 496–537, and 588–612; these read LREQ…QEER, ALPG…SIPQ, PITK…GVAA, and PVQG…QDHQ. The segment covering 429–441 has biased composition (basic and acidic residues); the sequence is GGGHLDSEGEEAP. Positions 509–522 are enriched in gly residues; it reads PGGGHHQAGPGQGG.

The protein belongs to the GOLGA8 family.

In Homo sapiens (Human), this protein is Golgin subfamily A member 8F.